We begin with the raw amino-acid sequence, 284 residues long: Formamidopyrimidine-DNA glycosylase (284 aa).

Proline 2 acts as the Schiff-base intermediate with DNA in catalysis. The active-site Proton donor is glutamate 3. Catalysis depends on lysine 61, which acts as the Proton donor; for beta-elimination activity. Histidine 95, arginine 114, and arginine 159 together coordinate DNA. The FPG-type zinc-finger motif lies at 244–278 (WVYGRKGQPCRVCNTPIERIRLAGRSTHFCPTCQR). The Proton donor; for delta-elimination activity role is filled by arginine 268.

This sequence belongs to the FPG family. As to quaternary structure, monomer. Zn(2+) is required as a cofactor.

The enzyme catalyses Hydrolysis of DNA containing ring-opened 7-methylguanine residues, releasing 2,6-diamino-4-hydroxy-5-(N-methyl)formamidopyrimidine.. It carries out the reaction 2'-deoxyribonucleotide-(2'-deoxyribose 5'-phosphate)-2'-deoxyribonucleotide-DNA = a 3'-end 2'-deoxyribonucleotide-(2,3-dehydro-2,3-deoxyribose 5'-phosphate)-DNA + a 5'-end 5'-phospho-2'-deoxyribonucleoside-DNA + H(+). Involved in base excision repair of DNA damaged by oxidation or by mutagenic agents. Acts as a DNA glycosylase that recognizes and removes damaged bases. Has a preference for oxidized purines, such as 7,8-dihydro-8-oxoguanine (8-oxoG). Has AP (apurinic/apyrimidinic) lyase activity and introduces nicks in the DNA strand. Cleaves the DNA backbone by beta-delta elimination to generate a single-strand break at the site of the removed base with both 3'- and 5'-phosphates. The sequence is that of Formamidopyrimidine-DNA glycosylase from Gloeobacter violaceus (strain ATCC 29082 / PCC 7421).